Consider the following 459-residue polypeptide: Friend virus susceptibility protein 1 (459 aa).

The tract at residues 192-269 is disordered; the sequence is EAELPTVLAS…LNSLAHSNRQ (78 aa). A compositionally biased stretch (basic and acidic residues) spans 213–223; that stretch reads SKERTQQDKAD. Positions 226 to 238 are enriched in polar residues; that stretch reads QIQSSTSLVTSEP.

Retroviral restriction factor that prevents infection by gammaretroviruses. Acts by interacting with the capsid protein ca after entry of the virus into the cell. This interaction presumably disrupt the capsid thereby inactivating the viral genome, making it unable to enter host nucleus and integrate into host genome. The chain is Friend virus susceptibility protein 1 (Fv1) from Mus musculus (Mouse).